The sequence spans 343 residues: S-adenosylmethionine:tRNA ribosyltransferase-isomerase (343 aa).

This sequence belongs to the QueA family. As to quaternary structure, monomer.

It localises to the cytoplasm. It catalyses the reaction 7-aminomethyl-7-carbaguanosine(34) in tRNA + S-adenosyl-L-methionine = epoxyqueuosine(34) in tRNA + adenine + L-methionine + 2 H(+). The protein operates within tRNA modification; tRNA-queuosine biosynthesis. Functionally, transfers and isomerizes the ribose moiety from AdoMet to the 7-aminomethyl group of 7-deazaguanine (preQ1-tRNA) to give epoxyqueuosine (oQ-tRNA). The chain is S-adenosylmethionine:tRNA ribosyltransferase-isomerase from Pseudoalteromonas translucida (strain TAC 125).